Consider the following 128-residue polypeptide: S-adenosylmethionine decarboxylase proenzyme (128 aa).

Residue serine 63 is the Schiff-base intermediate with substrate; via pyruvic acid of the active site. Serine 63 carries the pyruvic acid (Ser); by autocatalysis modification. Histidine 68 (proton acceptor; for processing activity) is an active-site residue. The active-site Proton donor; for catalytic activity is the cysteine 83.

The protein belongs to the prokaryotic AdoMetDC family. Type 1 subfamily. As to quaternary structure, heterotetramer of two alpha and two beta chains arranged as a dimer of alpha/beta heterodimers. It depends on pyruvate as a cofactor. In terms of processing, is synthesized initially as an inactive proenzyme. Formation of the active enzyme involves a self-maturation process in which the active site pyruvoyl group is generated from an internal serine residue via an autocatalytic post-translational modification. Two non-identical subunits are generated from the proenzyme in this reaction, and the pyruvate is formed at the N-terminus of the alpha chain, which is derived from the carboxyl end of the proenzyme. The post-translation cleavage follows an unusual pathway, termed non-hydrolytic serinolysis, in which the side chain hydroxyl group of the serine supplies its oxygen atom to form the C-terminus of the beta chain, while the remainder of the serine residue undergoes an oxidative deamination to produce ammonia and the pyruvoyl group blocking the N-terminus of the alpha chain.

The catalysed reaction is S-adenosyl-L-methionine + H(+) = S-adenosyl 3-(methylsulfanyl)propylamine + CO2. The protein operates within amine and polyamine biosynthesis; S-adenosylmethioninamine biosynthesis; S-adenosylmethioninamine from S-adenosyl-L-methionine: step 1/1. Functionally, catalyzes the decarboxylation of S-adenosylmethionine to S-adenosylmethioninamine (dcAdoMet), the propylamine donor required for the synthesis of the polyamines spermine and spermidine from the diamine putrescine. The sequence is that of S-adenosylmethionine decarboxylase proenzyme from Leptospira borgpetersenii serovar Hardjo-bovis (strain JB197).